A 154-amino-acid polypeptide reads, in one-letter code: Protein disulfide-isomerase LQY1, chloroplastic (154 aa).

A chloroplast-targeting transit peptide spans 1–43 (MPVSAPSPPRLHSPFIHCPINFTPSSFSARNLRSPSTSYPRIK). A helical transmembrane segment spans residues 51-71 (VVAISVGVASVALGIGIPVFY). Residues 77–147 (NAAKRENTQP…SGVQPRYLDR (71 aa)) form a CR-type zinc finger. The Zn(2+) site is built by C87, C90, C98, C101, C121, C124, C132, and C135.

The protein belongs to the BSD2 chaperone family. As to quaternary structure, interacts with the photosystem II core subunits. Interacts with HHL1. Zn(2+) is required as a cofactor.

Its subcellular location is the plastid. The protein resides in the chloroplast thylakoid membrane. It catalyses the reaction Catalyzes the rearrangement of -S-S- bonds in proteins.. In terms of biological role, protein disulfide-isomerase probably involved upon formation of a complex with HHL1 in maintaining photosystem II (PSII) activity under high light by regulating repair and reassembly of PSII complexes. The polypeptide is Protein disulfide-isomerase LQY1, chloroplastic (Arabidopsis thaliana (Mouse-ear cress)).